The chain runs to 226 residues: 2-C-methyl-D-erythritol 4-phosphate cytidylyltransferase (226 aa).

The protein belongs to the IspD/TarI cytidylyltransferase family. IspD subfamily.

The enzyme catalyses 2-C-methyl-D-erythritol 4-phosphate + CTP + H(+) = 4-CDP-2-C-methyl-D-erythritol + diphosphate. It functions in the pathway isoprenoid biosynthesis; isopentenyl diphosphate biosynthesis via DXP pathway; isopentenyl diphosphate from 1-deoxy-D-xylulose 5-phosphate: step 2/6. Functionally, catalyzes the formation of 4-diphosphocytidyl-2-C-methyl-D-erythritol from CTP and 2-C-methyl-D-erythritol 4-phosphate (MEP). The sequence is that of 2-C-methyl-D-erythritol 4-phosphate cytidylyltransferase from Microcystis aeruginosa (strain NIES-843 / IAM M-2473).